Reading from the N-terminus, the 388-residue chain is Probable Na(+)/H(+) antiporter 3 (388 aa).

Transmembrane regions (helical) follow at residues 2-22 (ESYY…PNLL), 27-47 (IPAI…GLNI), 53-73 (TLKI…GLEV), 81-101 (EFKN…VGGY), 102-122 (LIGQ…VIFA), 146-166 (IILS…SVVI), 175-195 (VGTF…AIPS), 215-235 (VLFI…HPIV), 263-283 (AIGY…ETNI), 294-314 (LLLI…FIAL), 325-345 (TIGG…ASIG), and 354-374 (EIFV…PIVV).

This sequence belongs to the monovalent cation:proton antiporter 1 (CPA1) transporter (TC 2.A.36) family.

It localises to the cell membrane. Functionally, this is probably a Na(+)/H(+) antiporter. The polypeptide is Probable Na(+)/H(+) antiporter 3 (Methanocaldococcus jannaschii (strain ATCC 43067 / DSM 2661 / JAL-1 / JCM 10045 / NBRC 100440) (Methanococcus jannaschii)).